The sequence spans 710 residues: Effector protein AvrPphD (710 aa).

Residues Met-1–Pro-15 show a composition bias toward polar residues. Disordered stretches follow at residues Met-1–Arg-36, Ile-136–Ser-155, and Ser-173–Ser-207.

Its subcellular location is the secreted. Its function is as follows. Effector protein involved in non-host recognition and able to elicit hypersensitive response (HR). The chain is Effector protein AvrPphD (avrPphD) from Pseudomonas savastanoi pv. phaseolicola (Pseudomonas syringae pv. phaseolicola).